The primary structure comprises 218 residues: tRNA (guanine-N(7)-)-methyltransferase (218 aa).

Positions 1–26 (MRLKNKPWANELVEEHPESALDRPDP) are disordered. A compositionally biased stretch (basic and acidic residues) spans 13 to 26 (VEEHPESALDRPDP). S-adenosyl-L-methionine-binding residues include Glu45, Glu70, Asp97, and Asp119. Asp119 is an active-site residue. Lys123 contacts substrate. The tract at residues 125 to 130 (RHEKRR) is interaction with RNA. Residues Asp155 and 195-198 (TEYE) contribute to the substrate site.

Belongs to the class I-like SAM-binding methyltransferase superfamily. TrmB family.

The enzyme catalyses guanosine(46) in tRNA + S-adenosyl-L-methionine = N(7)-methylguanosine(46) in tRNA + S-adenosyl-L-homocysteine. It functions in the pathway tRNA modification; N(7)-methylguanine-tRNA biosynthesis. Catalyzes the formation of N(7)-methylguanine at position 46 (m7G46) in tRNA. The sequence is that of tRNA (guanine-N(7)-)-methyltransferase from Lactobacillus delbrueckii subsp. bulgaricus (strain ATCC 11842 / DSM 20081 / BCRC 10696 / JCM 1002 / NBRC 13953 / NCIMB 11778 / NCTC 12712 / WDCM 00102 / Lb 14).